The following is a 312-amino-acid chain: Pantothenate kinase (312 aa).

97–104 (GSVAVGKS) provides a ligand contact to ATP.

The protein belongs to the prokaryotic pantothenate kinase family.

The protein localises to the cytoplasm. The enzyme catalyses (R)-pantothenate + ATP = (R)-4'-phosphopantothenate + ADP + H(+). The protein operates within cofactor biosynthesis; coenzyme A biosynthesis; CoA from (R)-pantothenate: step 1/5. This Mycobacterium marinum (strain ATCC BAA-535 / M) protein is Pantothenate kinase.